Reading from the N-terminus, the 400-residue chain is Subtilisin-like protease 2 (400 aa).

A signal peptide spans 1-20 (MKFSQSLIALAACFLPLIAA). A propeptide spanning residues 21-119 (APEEAQHAKI…IERDGKVQAN (99 aa)) is cleaved from the precursor. An Inhibitor I9 domain is found at 42-117 (SYIVVFNKGV…AWIERDGKVQ (76 aa)). The N-linked (GlcNAc...) asparagine glycan is linked to Asn-82. Residues 128 to 400 (TWGLGRISHK…NLIAYNGNGA (273 aa)) enclose the Peptidase S8 domain. Catalysis depends on charge relay system residues Asp-160, His-192, and Ser-345.

The protein belongs to the peptidase S8 family.

The protein localises to the secreted. Its activity is regulated as follows. Potently inhibited by the serine peptidase inhibitor chymostatin. Also inhibited by antpain and PMSF. Its function is as follows. Major secreted subtilisin-like serine endopeptidase. Preferentially cleaves substrates containing hydrophobic residues at P4, positively charged residues at P3, small or flexible residues at P2, and large, bulky residues at P1. Mediates the degradation of collagen, the major structural protein in the mammalian host. Degrades the nonhelical regions of collagen that function in the cross-linking of the helical components. May function as virulence factor involved in epidermal wing necrosis observed in white nose syndrome (WNS) in bats. The polypeptide is Subtilisin-like protease 2 (Pseudogymnoascus destructans (strain ATCC MYA-4855 / 20631-21) (Bat white-nose syndrome fungus)).